A 406-amino-acid polypeptide reads, in one-letter code: Probable 4-hydroxyphenylpyruvate dioxygenase 2 (406 aa).

VOC domains follow at residues 22-174 (GFDH…LINR) and 205-363 (EIDH…IFSK). Fe cation-binding residues include H208, H291, and E374.

Belongs to the 4HPPD family. The cofactor is Fe cation.

It catalyses the reaction 3-(4-hydroxyphenyl)pyruvate + O2 = homogentisate + CO2. It participates in amino-acid degradation; L-phenylalanine degradation; acetoacetate and fumarate from L-phenylalanine: step 3/6. The chain is Probable 4-hydroxyphenylpyruvate dioxygenase 2 from Aspergillus fumigatus (strain ATCC MYA-4609 / CBS 101355 / FGSC A1100 / Af293) (Neosartorya fumigata).